A 365-amino-acid polypeptide reads, in one-letter code: Short-chain dehydrogenase iccH (365 aa).

Residues Leu-16, Arg-52, and Asp-70 each coordinate NADP(+). The N-linked (GlcNAc...) asparagine glycan is linked to Asn-90. Positions 102, 221, 225, and 260 each coordinate NADP(+). Tyr-221 serves as the catalytic Proton donor. Catalysis depends on Lys-225, which acts as the Lowers pKa of active site Tyr. Residues 267 to 287 (IWVMFLLMKFVLPLLAPLAVW) form a helical membrane-spanning segment. Asn-291 and Asn-324 each carry an N-linked (GlcNAc...) asparagine glycan.

Belongs to the short-chain dehydrogenases/reductases (SDR) family.

Its subcellular location is the membrane. Its pathway is mycotoxin biosynthesis. In terms of biological role, NADH-dependent flavin oxidoreductase; part of the gene cluster that mediates the biosynthesis of ilicicolin H, a 4-hydroxy-2-pyridonealkaloid that has potent and broad antifungal activities by inhibiting the mitochondrial respiration chain. IccA to iccE are sufficient for ilicicolin H biosynthesis and the roles of the remaining enzymes, iccF, iccG and iccH within the pathway have still to be determined. The biosynthesis of ilicicolin H starts with formation of the tetramic acid by the hybrid PKS-NRPS synthetase iccA with the partnering trans-enoyl reductase iccB since iccA lacks a designated enoylreductase (ER) domain. The cytochrome P450 monooxygenase iccC then catalyzes the ring expansion of the tetramate to the acyclic 2-pyridone. The pericyclase iccD further converts the acyclic 2-pyridone into 8-epi-ilicicolin H. Finally, the epimerase iccE converts 8-epi-ilicicolin H into ilicicolin H via epimerizationd. This chain is Short-chain dehydrogenase iccH, found in Talaromyces variabilis (Penicillium variabile).